The primary structure comprises 252 residues: Glycerol-3-phosphate acyltransferase (252 aa).

The next 6 membrane-spanning stretches (helical) occupy residues 6-26, 66-86, 104-124, 140-160, 164-184, and 204-224; these read SVAM…YLIG, ILTL…TYII, AILV…PIFF, ITID…ILLI, MSLS…IPGI, and VIKG…ILIY.

The protein belongs to the PlsY family. As to quaternary structure, probably interacts with PlsX.

The protein resides in the cell membrane. It carries out the reaction an acyl phosphate + sn-glycerol 3-phosphate = a 1-acyl-sn-glycero-3-phosphate + phosphate. It participates in lipid metabolism; phospholipid metabolism. Catalyzes the transfer of an acyl group from acyl-phosphate (acyl-PO(4)) to glycerol-3-phosphate (G3P) to form lysophosphatidic acid (LPA). This enzyme utilizes acyl-phosphate as fatty acyl donor, but not acyl-CoA or acyl-ACP. The protein is Glycerol-3-phosphate acyltransferase of Ureaplasma urealyticum serovar 10 (strain ATCC 33699 / Western).